A 361-amino-acid chain; its full sequence is Chorismate synthase (361 aa).

Position 48 (Arg48) interacts with NADP(+). Residues 125 to 127, 238 to 239, Gly278, 293 to 297, and Arg319 each bind FMN; these read RSS, NA, and KPTSS.

This sequence belongs to the chorismate synthase family. In terms of assembly, homotetramer. The cofactor is FMNH2.

It carries out the reaction 5-O-(1-carboxyvinyl)-3-phosphoshikimate = chorismate + phosphate. Its pathway is metabolic intermediate biosynthesis; chorismate biosynthesis; chorismate from D-erythrose 4-phosphate and phosphoenolpyruvate: step 7/7. Functionally, catalyzes the anti-1,4-elimination of the C-3 phosphate and the C-6 proR hydrogen from 5-enolpyruvylshikimate-3-phosphate (EPSP) to yield chorismate, which is the branch point compound that serves as the starting substrate for the three terminal pathways of aromatic amino acid biosynthesis. This reaction introduces a second double bond into the aromatic ring system. In Aliivibrio fischeri (strain MJ11) (Vibrio fischeri), this protein is Chorismate synthase.